A 537-amino-acid chain; its full sequence is Chaperonin GroEL (537 aa).

Residues 29–32 (TLGP), 86–90 (DGTTT), Gly-413, 477–479 (NAA), and Asp-493 contribute to the ATP site.

Belongs to the chaperonin (HSP60) family. Forms a cylinder of 14 subunits composed of two heptameric rings stacked back-to-back. Interacts with the co-chaperonin GroES.

The protein localises to the cytoplasm. The catalysed reaction is ATP + H2O + a folded polypeptide = ADP + phosphate + an unfolded polypeptide.. In terms of biological role, together with its co-chaperonin GroES, plays an essential role in assisting protein folding. The GroEL-GroES system forms a nano-cage that allows encapsulation of the non-native substrate proteins and provides a physical environment optimized to promote and accelerate protein folding. The sequence is that of Chaperonin GroEL from Parascardovia denticolens (Bifidobacterium denticolens).